Reading from the N-terminus, the 83-residue chain is Cytochrome c-554(548) (83 aa).

Positions 14, 17, 18, and 63 each coordinate heme c.

Homodimer. In terms of processing, binds 1 heme c group covalently per subunit.

The chain is Cytochrome c-554(548) from Halomonas halodenitrificans (strain ATCC 12084 / NCIMB 8669) (Paracoccus halodenitrificans).